The primary structure comprises 138 residues: Putative pre-16S rRNA nuclease (138 aa).

Belongs to the YqgF nuclease family.

Its subcellular location is the cytoplasm. Its function is as follows. Could be a nuclease involved in processing of the 5'-end of pre-16S rRNA. The polypeptide is Putative pre-16S rRNA nuclease (Enterobacter sp. (strain 638)).